The chain runs to 93 residues: YcgL domain-containing protein VFMJ11_1829 (93 aa).

A YcgL domain is found at methionine 1–lysine 84.

The protein is YcgL domain-containing protein VFMJ11_1829 of Aliivibrio fischeri (strain MJ11) (Vibrio fischeri).